The sequence spans 448 residues: MNAHEVNFDGLVGPTHNYGGLSYGNVASQSNSQAVSNPKEAAKQGLAKMKALMEMGFKQGVLAPQARPDTAALRSLGFSGSDEEVIRRAAKEAMPLLAACSSASSMWTANAATVSPSADTADGRVHFTAANLNCKFHRSIEHPTTSRVLAAMFNDERYFAHHAALPAVSQFGDEGAANHTRFCKDYGDAGVEFFVFGRSAFDSRFPAPQRYPARQTLEACQAVARLHGLSEAGVVYAQQNPAVIDQGVFHNDVISVGNGEVLFHHEDAFLDTEKVLAELHDKLGRRGGRFRAICVPRDQVAVEDAVKSYLFNSQLLSKADGSMLLVVPEECRNNPRVWNYLDQLTGDDGPIREVKVFDLKQSMQNGGGPACLRLRVALQERELAAVNPGVIMSAGLYDTLVAWVDRHYRDRLSETDLADPQLLLECRTALDELTQILKLGSVYSFQLD.

Substrate-binding positions include 19 to 28, Asn-110, and 137 to 138; these read GGLSYGNVAS and HR. The active site involves Glu-174. Arg-214 lines the substrate pocket. The active site involves His-250. Residues Asp-252 and Asn-365 each coordinate substrate. Residue Cys-371 is the Nucleophile of the active site.

It belongs to the succinylarginine dihydrolase family. In terms of assembly, homodimer.

It catalyses the reaction N(2)-succinyl-L-arginine + 2 H2O + 2 H(+) = N(2)-succinyl-L-ornithine + 2 NH4(+) + CO2. The protein operates within amino-acid degradation; L-arginine degradation via AST pathway; L-glutamate and succinate from L-arginine: step 2/5. In terms of biological role, catalyzes the hydrolysis of N(2)-succinylarginine into N(2)-succinylornithine, ammonia and CO(2). This Pseudomonas aeruginosa (strain UCBPP-PA14) protein is N-succinylarginine dihydrolase.